A 454-amino-acid chain; its full sequence is MNLKKKKVLVVGAGRSGLAAVKRLKALGARVILTDQKEPDQLSGILELGLPDGQLVLGHIPQWHEVEAEVIVLSPGVSPQLPFIQEGIAQGALVWSEVELALRDHPAFKIGVTGTNGKTTTTTLIGELARRTGKSTLVAGNIGVALSDQVENLDEEGIIVAELSSFQLELVDSLCMNVGILLNVTPDHLDRHGTLENYLAAKARIFEKQRPSDCAILNWDDARVRELAPHLKARVVFFSPTSLLAEGYGVQGDEIVLARDGKITPIIKRRELQLRGNHNLENIMASIAAVRELGLSWEEIAQGLREFKGVEHRQEVVGTYEGILFINDSKGTNPDAAEKALYAFEEPIVLIAGGKNKGLDFHDFMKTVKEQVKSLVLVGSAAAEMEQAAKDTGIRHYLRAETFAEAVELAIAEAEPGNVVLLSPACTSWDMFKSYEERGEFFKELVRRHYREPI.

114-120 (GTNGKTT) contacts ATP.

The protein belongs to the MurCDEF family.

The protein localises to the cytoplasm. The catalysed reaction is UDP-N-acetyl-alpha-D-muramoyl-L-alanine + D-glutamate + ATP = UDP-N-acetyl-alpha-D-muramoyl-L-alanyl-D-glutamate + ADP + phosphate + H(+). Its pathway is cell wall biogenesis; peptidoglycan biosynthesis. Functionally, cell wall formation. Catalyzes the addition of glutamate to the nucleotide precursor UDP-N-acetylmuramoyl-L-alanine (UMA). In Desulfitobacterium hafniense (strain DSM 10664 / DCB-2), this protein is UDP-N-acetylmuramoylalanine--D-glutamate ligase.